The sequence spans 944 residues: 2-oxoglutarate dehydrogenase E1 component (944 aa).

Positions 915–944 (RRRSSPAEGDPTVHKKEQERIVSDSLTRKN) are disordered. A compositionally biased stretch (basic and acidic residues) spans 925–936 (PTVHKKEQERIV).

The protein belongs to the alpha-ketoglutarate dehydrogenase family. As to quaternary structure, homodimer. Part of the 2-oxoglutarate dehydrogenase (OGDH) complex composed of E1 (2-oxoglutarate dehydrogenase), E2 (dihydrolipoamide succinyltransferase) and E3 (dihydrolipoamide dehydrogenase); the complex contains multiple copies of the three enzymatic components (E1, E2 and E3). Thiamine diphosphate is required as a cofactor.

It carries out the reaction N(6)-[(R)-lipoyl]-L-lysyl-[protein] + 2-oxoglutarate + H(+) = N(6)-[(R)-S(8)-succinyldihydrolipoyl]-L-lysyl-[protein] + CO2. In terms of biological role, E1 component of the 2-oxoglutarate dehydrogenase (OGDH) complex which catalyzes the decarboxylation of 2-oxoglutarate, the first step in the conversion of 2-oxoglutarate to succinyl-CoA and CO(2). This chain is 2-oxoglutarate dehydrogenase E1 component, found in Bacillus velezensis (strain DSM 23117 / BGSC 10A6 / LMG 26770 / FZB42) (Bacillus amyloliquefaciens subsp. plantarum).